The primary structure comprises 809 residues: Hydrazine synthase subunit alpha (809 aa).

Residues 1–27 form the signal peptide; that stretch reads MGKRKLGVIASAFVAGALVCGSTLVNA. C303 contributes to the Zn(2+) binding site. Heme is bound by residues C583 and C586. H587 provides a ligand contact to Zn(2+). 5 residues coordinate heme: Y591, C685, C688, H689, and H772. The Cytochrome c domain maps to 633–792; that stretch reads KGVKHGEDVV…AIVEWIDLGA (160 aa).

Part of the hydrazine synthase complex that forms an elongated dimer of heterotrimers composed of one alpha, one beta and one gamma subunit. Requires heme c as cofactor.

Its subcellular location is the anammoxosome. The catalysed reaction is hydrazine + 3 Fe(III)-[cytochrome c] + H2O = nitric oxide + 3 Fe(II)-[cytochrome c] + NH4(+) + 2 H(+). Its pathway is nitrogen metabolism. Component of the hydrazine synthase complex that catalyzes the condensation of nitric oxide (NO) with ammonium to form hydrazine. The alpha subunit catalyzes the second half-reaction, i.e. the condensation of hydroxylamine formed in the active site of the gamma subunit with ammonia, yielding hydrazine. Is involved in anaerobic ammonium oxidation (anammox), a biological process in which nitrite is used as the electron acceptor in the conversion of ammonium to dinitrogen gas (N2) and water; this bacterial process has a major role in the Earth's nitrogen cycle and has been estimated to synthesize up to 50% of the dinitrogen gas emitted into our atmosphere from the oceans. The sequence is that of Hydrazine synthase subunit alpha from Kuenenia stuttgartiensis.